A 341-amino-acid chain; its full sequence is N-acetyl-gamma-glutamyl-phosphate reductase (341 aa).

The active site involves cysteine 147.

It belongs to the NAGSA dehydrogenase family. Type 1 subfamily.

It localises to the cytoplasm. It catalyses the reaction N-acetyl-L-glutamate 5-semialdehyde + phosphate + NADP(+) = N-acetyl-L-glutamyl 5-phosphate + NADPH + H(+). The protein operates within amino-acid biosynthesis; L-arginine biosynthesis; N(2)-acetyl-L-ornithine from L-glutamate: step 3/4. Its function is as follows. Catalyzes the NADPH-dependent reduction of N-acetyl-5-glutamyl phosphate to yield N-acetyl-L-glutamate 5-semialdehyde. The sequence is that of N-acetyl-gamma-glutamyl-phosphate reductase from Dehalococcoides mccartyi (strain ATCC BAA-2100 / JCM 16839 / KCTC 5957 / BAV1).